A 679-amino-acid chain; its full sequence is Membrane-spanning 4-domains subfamily A member 14 (679 aa).

Helical transmembrane passes span 50-70 (ILLALIIVGFGTIFALNYIGF), 76-96 (LVVLTGYPFWGALIFILTGYL), 110-130 (VTGMNVISSLVAITGITFTIL), and 141-161 (MPSFEEICVFSRTLFIVLFFL). Disordered regions lie at residues 218–259 (VSQP…EKKP), 331–363 (SEQTMPSKSTSSHVKQSSNLTANDLPPQGILSQ), 469–491 (KEWKSEEELHRRKSSRRHSLNQQ), and 505–633 (VQAK…QAQV). Positions 224-234 (KGREFVPDEQK) are enriched in basic and acidic residues. Over residues 337–348 (SKSTSSHVKQSS) the composition is skewed to low complexity. The segment covering 469-478 (KEWKSEEELH) has biased composition (basic and acidic residues). 2 stretches are compositionally biased toward polar residues: residues 519 to 535 (DQQSKGWQSPKQKSLDQ) and 550 to 563 (KQAQLNQTKEQLPD). A compositionally biased stretch (basic and acidic residues) spans 580–601 (QSKDGQVKDQQTDKEQNSKKQT). Positions 619 to 632 (GQFQNVQAEGQQAQ) are enriched in polar residues.

The protein belongs to the MS4A family.

The protein resides in the membrane. Its function is as follows. May be involved in signal transduction as a component of a multimeric receptor complex. The sequence is that of Membrane-spanning 4-domains subfamily A member 14 (MS4A14) from Homo sapiens (Human).